Here is a 390-residue protein sequence, read N- to C-terminus: Putative transposase YncI (390 aa).

It belongs to the transposase 11 family.

In Escherichia coli O157:H7, this protein is Putative transposase YncI (yncI).